The following is a 170-amino-acid chain: Zinc finger A20 and AN1 domain-containing stress-associated protein 6 (170 aa).

An A20-type zinc finger spans residues 10 to 44; that stretch reads PESNRLCVNNCGFLGSSATMNLCSNCYGDLCLKQQ. Positions 16, 20, 32, and 35 each coordinate Zn(2+). The disordered stretch occupies residues 53-76; the sequence is TVESSLSVSPPSSSSSEISSPIIP. Residues 105–151 form an AN1-type zinc finger; the sequence is QQRPNRCTTCRKRVGLTGFKCRCGTMFCGVHRYPEIHGCSYDFKSAG. Positions 111, 114, 125, 127, 132, 135, 141, and 143 each coordinate Zn(2+).

May be involved in environmental stress response. This chain is Zinc finger A20 and AN1 domain-containing stress-associated protein 6 (SAP6), found in Arabidopsis thaliana (Mouse-ear cress).